Reading from the N-terminus, the 159-residue chain is 2-C-methyl-D-erythritol 2,4-cyclodiphosphate synthase (159 aa).

Aspartate 10 and histidine 12 together coordinate a divalent metal cation. 4-CDP-2-C-methyl-D-erythritol 2-phosphate-binding positions include 10 to 12 (DVH) and 36 to 37 (HS). Histidine 44 is a binding site for a divalent metal cation. Residues 58-60 (DIG), 134-137 (TTTE), phenylalanine 141, and arginine 144 each bind 4-CDP-2-C-methyl-D-erythritol 2-phosphate.

The protein belongs to the IspF family. Homotrimer. It depends on a divalent metal cation as a cofactor.

The catalysed reaction is 4-CDP-2-C-methyl-D-erythritol 2-phosphate = 2-C-methyl-D-erythritol 2,4-cyclic diphosphate + CMP. It participates in isoprenoid biosynthesis; isopentenyl diphosphate biosynthesis via DXP pathway; isopentenyl diphosphate from 1-deoxy-D-xylulose 5-phosphate: step 4/6. Involved in the biosynthesis of isopentenyl diphosphate (IPP) and dimethylallyl diphosphate (DMAPP), two major building blocks of isoprenoid compounds. Catalyzes the conversion of 4-diphosphocytidyl-2-C-methyl-D-erythritol 2-phosphate (CDP-ME2P) to 2-C-methyl-D-erythritol 2,4-cyclodiphosphate (ME-CPP) with a corresponding release of cytidine 5-monophosphate (CMP). The sequence is that of 2-C-methyl-D-erythritol 2,4-cyclodiphosphate synthase from Bacteroides fragilis (strain ATCC 25285 / DSM 2151 / CCUG 4856 / JCM 11019 / LMG 10263 / NCTC 9343 / Onslow / VPI 2553 / EN-2).